The primary structure comprises 305 residues: Fumarylacetoacetate hydrolase domain-containing protein 2 homolog (305 aa).

Residues E141, E143, and D172 each contribute to the a divalent metal cation site.

It belongs to the FAH family. Ca(2+) serves as cofactor. Mg(2+) is required as a cofactor.

Functionally, may have hydrolase activity. This is Fumarylacetoacetate hydrolase domain-containing protein 2 homolog (fahd2) from Dictyostelium discoideum (Social amoeba).